We begin with the raw amino-acid sequence, 352 residues long: Phosphate acetyltransferase (352 aa).

Belongs to the phosphate acetyltransferase and butyryltransferase family.

The protein localises to the cytoplasm. It catalyses the reaction acetyl-CoA + phosphate = acetyl phosphate + CoA. It functions in the pathway metabolic intermediate biosynthesis; acetyl-CoA biosynthesis; acetyl-CoA from acetate: step 2/2. This is Phosphate acetyltransferase (pta) from Borreliella burgdorferi (strain ATCC 35210 / DSM 4680 / CIP 102532 / B31) (Borrelia burgdorferi).